The primary structure comprises 452 residues: Membrane-bound acylglycerophosphatidylinositol O-acyltransferase mboa-7 (452 aa).

A run of 4 helical transmembrane segments spans residues 4 to 24, 53 to 73, 79 to 99, and 104 to 124; these read IIGL…FSFA, PRIA…AFAP, FYVF…HYFL, and VASH…GITF. An N-linked (GlcNAc...) asparagine glycan is attached at Asn-137. The next 3 helical transmembrane spans lie at 153–173, 220–240, and 244–264; these read FAYF…YQML, AIWE…FVVF, and VYSA…GIYP. Residue Asn-319 is glycosylated (N-linked (GlcNAc...) asparagine). His-350 is a catalytic residue. Residues 354-374 traverse the membrane as a helical segment; the sequence is AGYFMSFGVVAMCAILEDVIF. Asn-414 is a glycosylation site (N-linked (GlcNAc...) asparagine). Residues 421 to 441 traverse the membrane as a helical segment; sequence FWSSIYYWLPLLCVPFYIYSV.

It belongs to the membrane-bound acyltransferase family.

It localises to the membrane. The enzyme catalyses a 1-acyl-sn-glycero-3-phospho-(1D-myo-inositol) + an acyl-CoA = a 1,2-diacyl-sn-glycero-3-phospho-(1D-myo-inositol) + CoA. The catalysed reaction is a fatty acyl-[ACP] + a 1-acyl-sn-glycero-3-phosphate = a 1,2-diacyl-sn-glycero-3-phosphate + holo-[ACP]. The protein operates within lipid metabolism; phospholipid metabolism. Its function is as follows. Acyltransferase which mediates the conversion of lysophosphatidylinositol (1-acylglycerophosphatidylinositol or LPI) into phosphatidylinositol (1,2-diacyl-sn-glycero-3-phosphoinositol or PI) (LPIAT activity). Prefers arachidonoyl-CoA or eicosapentaenoic acid (EPA) as the acyl donor. Prefers sn-2-LPI rather than sn-1-LPI as the acyl acceptor. Lysophospholipid acyltransferases (LPLATs) catalyze the reacylation step of the phospholipid remodeling pathway also known as the Lands cycle. The chain is Membrane-bound acylglycerophosphatidylinositol O-acyltransferase mboa-7 from Caenorhabditis briggsae.